Here is a 112-residue protein sequence, read N- to C-terminus: Large ribosomal subunit protein P2A (112 aa).

The interval 83–112 is disordered; sequence GAAPAAEAKKEEKVEEKEESDDDMGFSLFD. Positions 89 to 98 are enriched in basic and acidic residues; sequence EAKKEEKVEE.

It belongs to the eukaryotic ribosomal protein P1/P2 family. As to quaternary structure, P1 and P2 exist as dimers at the large ribosomal subunit. Phosphorylated.

In terms of biological role, plays an important role in the elongation step of protein synthesis. The sequence is that of Large ribosomal subunit protein P2A (RPP2A) from Zea mays (Maize).